A 176-amino-acid chain; its full sequence is Skp1-related protein (176 aa).

This sequence belongs to the SKP1 family. As to quaternary structure, probable component of the SCF(sel-10) E3 ubiquitin-protein ligase complex containing F-box domain-containing protein sel-10 as the substrate recognition component. Interacts with cul-1. May interact with the F-box protein mec-15. Interacts with dre-1. Interacts with syg-1. Interacts with sel-10. As to expression, ubiquitously expressed in the adult.

Functionally, probable essential component of SCF (SKP1-CUL1-F-box protein) E3 ubiquitin-protein ligase complexes, which mediate the ubiquitination and subsequent proteasomal degradation of target proteins. Regulates cell proliferation during embryonic and larval development. Involved in synapse elimination in early synapse development. May negatively regulate the apoptotic activity of cep-1 in response to genotoxic stress. Plays a role in sex determination. This chain is Skp1-related protein, found in Caenorhabditis elegans.